The primary structure comprises 290 residues: MPDSLSFQALILKLHDYWSQQGCVILQPYDMEMGAGTFHPATSLKALGPNPWKAAYVQPCRRPADGRYGENPNRLCHYYQYQVILKPSPDNIQALYLGSLEAIGIDLSRHDIRFVEDDWESPTLGAWGLGWEVWCDGMEVTQFTYFQQIGGFDCKPVSGEITYGLERLAMYIQGVDNVYDLRFNDAGVSYGDVFLENERQFSAYNFEAANTETLFRWFKEASQECKALLERDKPLPLPAYDQAIKASHIFNLLQSRGMISVTERQAYIGRVRELTKAVAAAWMAYNGWEA.

Belongs to the class-II aminoacyl-tRNA synthetase family. As to quaternary structure, tetramer of two alpha and two beta subunits.

It localises to the cytoplasm. It catalyses the reaction tRNA(Gly) + glycine + ATP = glycyl-tRNA(Gly) + AMP + diphosphate. The polypeptide is Glycine--tRNA ligase alpha subunit (Zymomonas mobilis subsp. mobilis (strain ATCC 31821 / ZM4 / CP4)).